Reading from the N-terminus, the 561-residue chain is Arginine--tRNA ligase (561 aa).

The short motif at 128-138 is the 'HIGH' region element; it reads ANPTGPLHVGH.

The protein belongs to the class-I aminoacyl-tRNA synthetase family. As to quaternary structure, monomer.

The protein localises to the cytoplasm. It carries out the reaction tRNA(Arg) + L-arginine + ATP = L-arginyl-tRNA(Arg) + AMP + diphosphate. This is Arginine--tRNA ligase from Leptothrix cholodnii (strain ATCC 51168 / LMG 8142 / SP-6) (Leptothrix discophora (strain SP-6)).